Reading from the N-terminus, the 260-residue chain is uncharacterized protein (260 aa).

Residues 1–22 (MGNIKSFALYISILLLIVVVAG) form the signal peptide. Residue Cys-23 is the site of N-palmitoyl cysteine attachment. Cys-23 is lipidated: S-diacylglycerol cysteine.

This sequence belongs to the staphylococcal tandem lipoprotein family.

The protein resides in the cell membrane. This is an uncharacterized protein from Staphylococcus aureus (strain MRSA252).